The primary structure comprises 187 residues: Alpha-D-galactose-binding lectin (187 aa).

The signal sequence occupies residues 1 to 37 (MTFAKQSCFNSIILLSIATSYFKIGHKISELGNRIEK). N-acetylthreonine is present on Thr-39. N-acetyl-alpha-D-galactosamine-binding positions include 53–56 (HPKG), Asp-64, 72–76 (DIHER), His-101, Gly-104, Glu-112, 120–122 (DRH), His-145, Gly-148, Glu-156, and 164–166 (DKH).

In terms of assembly, homodimer. In terms of tissue distribution, highest expression in the posterior part of the mantle. Highly expressed in gills and to a lesser extent in mid mantle and anterior muscle. Lowest expression in digestive gland and posterior adductor muscle. Scarcely detectable in hemocytes.

Agglutination of E.coli is inhibited by alpha-galactoside melibiose, but not by beta-galactoside lactose. Its function is as follows. Alpha-D-galactose-binding lectin. Binds D-GalNAc, but not glucose or its derivatives. Has hemagglutinating activity towards rabbit erythrocytes. Agglutinates bacteria. Has bacteriostatic activity on both Gram-positive and Gram-negative bacteria including B.subtilis, S.aureus, E.coli and V.parahaemolyticus, respectively. Has a dose-dependent cytotoxic effect on the human globotriaosylceramide (Gb3)-expressing Epstein-Barr virus (EBV)-positive Burkitt's lymphoma (Raji) cell line. Has dose-dependent cytotoxic effect on another Burkitt's lymphoma (Ramos) cell line, which does not possess the EBV genome, but also expresses Gb3. Binds to Gb3 in these cells leading to phosphorylation of MEK1/2, ERK1/2, JNK and p38 kinase, activation of caspase-9/3 and to expression of p21 and tumor necrosis factor (TNF)-alpha. No cytotoxic effect on the human chronic myelogenous leukemia (K-562) cell line, which does not express Gb3. May be involved in innate immunity acting as an antibacterial or antifungal agent. May be a pattern recognition receptor (PRR) involved in recognition of glycans found on parasitic or symbiotic microorganisms. In Mytilus galloprovincialis (Mediterranean mussel), this protein is Alpha-D-galactose-binding lectin.